Here is a 248-residue protein sequence, read N- to C-terminus: PF03932 family protein CutC (248 aa).

Belongs to the CutC family.

It localises to the cytoplasm. The polypeptide is PF03932 family protein CutC (Photorhabdus laumondii subsp. laumondii (strain DSM 15139 / CIP 105565 / TT01) (Photorhabdus luminescens subsp. laumondii)).